The chain runs to 84 residues: Defensin-like protein 49 (84 aa).

An N-terminal signal peptide occupies residues 1–29; that stretch reads MGITKSLMIFFHIVLLAVSLSNNIILTSG. Disulfide bonds link cysteine 40-cysteine 82, cysteine 44-cysteine 68, cysteine 54-cysteine 80, and cysteine 58-cysteine 81.

Belongs to the DEFL family.

It is found in the secreted. This is Defensin-like protein 49 from Arabidopsis thaliana (Mouse-ear cress).